The primary structure comprises 316 residues: Acetylglutamate kinase (316 aa).

Substrate-binding positions include 76–77, Arg-98, and Asn-207; that span reads GG.

This sequence belongs to the acetylglutamate kinase family. ArgB subfamily.

It is found in the cytoplasm. The catalysed reaction is N-acetyl-L-glutamate + ATP = N-acetyl-L-glutamyl 5-phosphate + ADP. Its pathway is amino-acid biosynthesis; L-arginine biosynthesis; N(2)-acetyl-L-ornithine from L-glutamate: step 2/4. In terms of biological role, catalyzes the ATP-dependent phosphorylation of N-acetyl-L-glutamate. The polypeptide is Acetylglutamate kinase (Paenarthrobacter aurescens (strain TC1)).